A 91-amino-acid chain; its full sequence is Small ribosomal subunit protein uS19 (91 aa).

It belongs to the universal ribosomal protein uS19 family.

Protein S19 forms a complex with S13 that binds strongly to the 16S ribosomal RNA. This is Small ribosomal subunit protein uS19 from Bordetella pertussis (strain Tohama I / ATCC BAA-589 / NCTC 13251).